We begin with the raw amino-acid sequence, 127 residues long: Large ribosomal subunit protein bL17 (127 aa).

It belongs to the bacterial ribosomal protein bL17 family. As to quaternary structure, part of the 50S ribosomal subunit. Contacts protein L32.

This Ligilactobacillus salivarius (strain UCC118) (Lactobacillus salivarius) protein is Large ribosomal subunit protein bL17.